A 146-amino-acid polypeptide reads, in one-letter code: 3-dehydroquinate dehydratase (146 aa).

Catalysis depends on Tyr-23, which acts as the Proton acceptor. Substrate is bound by residues Asn-74, His-80, and Asp-87. His-100 acts as the Proton donor in catalysis. Substrate contacts are provided by residues 101–102 (IS) and Arg-111.

Belongs to the type-II 3-dehydroquinase family. Homododecamer.

It carries out the reaction 3-dehydroquinate = 3-dehydroshikimate + H2O. It functions in the pathway metabolic intermediate biosynthesis; chorismate biosynthesis; chorismate from D-erythrose 4-phosphate and phosphoenolpyruvate: step 3/7. Functionally, catalyzes a trans-dehydration via an enolate intermediate. This chain is 3-dehydroquinate dehydratase, found in Bacillus cereus (strain ATCC 10987 / NRS 248).